Consider the following 557-residue polypeptide: UvrABC system protein C (557 aa).

Residues 14–89 (EEPGVYIFKN…IKKYRPKYNV (76 aa)) enclose the GIY-YIG domain. The 36-residue stretch at 194-229 (EEVFDYLKEKMETHSKMLDFENAAKYRDLLLNLSNV) folds into the UVR domain.

Belongs to the UvrC family. In terms of assembly, interacts with UvrB in an incision complex.

It localises to the cytoplasm. In terms of biological role, the UvrABC repair system catalyzes the recognition and processing of DNA lesions. UvrC both incises the 5' and 3' sides of the lesion. The N-terminal half is responsible for the 3' incision and the C-terminal half is responsible for the 5' incision. This is UvrABC system protein C from Thermotoga sp. (strain RQ2).